A 129-amino-acid polypeptide reads, in one-letter code: Lysozyme C (129 aa).

A C-type lysozyme domain is found at 1 to 129 (KVYGRCELAA…VNAWTRGCRL (129 aa)). Intrachain disulfides connect cysteine 6–cysteine 127, cysteine 30–cysteine 115, cysteine 64–cysteine 80, and cysteine 76–cysteine 94. Active-site residues include glutamate 35 and aspartate 52.

This sequence belongs to the glycosyl hydrolase 22 family. In terms of assembly, monomer.

It is found in the secreted. It catalyses the reaction Hydrolysis of (1-&gt;4)-beta-linkages between N-acetylmuramic acid and N-acetyl-D-glucosamine residues in a peptidoglycan and between N-acetyl-D-glucosamine residues in chitodextrins.. In terms of biological role, lysozymes have primarily a bacteriolytic function; those in tissues and body fluids are associated with the monocyte-macrophage system and enhance the activity of immunoagents. The sequence is that of Lysozyme C (LYZ) from Chrysolophus amherstiae (Lady Amherst's pheasant).